The chain runs to 44 residues: Large ribosomal subunit protein bL34 (44 aa).

The disordered stretch occupies residues 1 to 26 (MQRTLGGTNRKRKRTSGFRARMRTPD). Positions 9–22 (NRKRKRTSGFRARM) are enriched in basic residues.

This sequence belongs to the bacterial ribosomal protein bL34 family.

This Trichormus variabilis (strain ATCC 29413 / PCC 7937) (Anabaena variabilis) protein is Large ribosomal subunit protein bL34.